The primary structure comprises 333 residues: L-lactate dehydrogenase B chain (333 aa).

NAD(+) contacts are provided by residues 29–57 (GQVGMACAISILGKGLCDELALVDVLEDK) and Arg99. Substrate is bound by residues Arg106, Asn138, and Arg169. An NAD(+)-binding site is contributed by Asn138. Residue His193 is the Proton acceptor of the active site. Thr248 contributes to the substrate binding site.

This sequence belongs to the LDH/MDH superfamily. LDH family. In terms of assembly, homotetramer.

It localises to the cytoplasm. It carries out the reaction (S)-lactate + NAD(+) = pyruvate + NADH + H(+). Its pathway is fermentation; pyruvate fermentation to lactate; (S)-lactate from pyruvate: step 1/1. Functionally, interconverts simultaneously and stereospecifically pyruvate and lactate with concomitant interconversion of NADH and NAD(+). The sequence is that of L-lactate dehydrogenase B chain (LDHB) from Pelodiscus sinensis japonicus (Chinese soft-shelled turtle).